The sequence spans 179 residues: UPF0227 protein Shew185_2404 (179 aa).

The protein belongs to the UPF0227 family.

In Shewanella baltica (strain OS185), this protein is UPF0227 protein Shew185_2404.